A 405-amino-acid polypeptide reads, in one-letter code: Tryptophan synthase beta chain (405 aa).

Lysine 95 is subject to N6-(pyridoxal phosphate)lysine.

It belongs to the TrpB family. In terms of assembly, tetramer of two alpha and two beta chains. It depends on pyridoxal 5'-phosphate as a cofactor.

The catalysed reaction is (1S,2R)-1-C-(indol-3-yl)glycerol 3-phosphate + L-serine = D-glyceraldehyde 3-phosphate + L-tryptophan + H2O. The protein operates within amino-acid biosynthesis; L-tryptophan biosynthesis; L-tryptophan from chorismate: step 5/5. Its function is as follows. The beta subunit is responsible for the synthesis of L-tryptophan from indole and L-serine. This chain is Tryptophan synthase beta chain, found in Pseudomonas putida (strain GB-1).